The chain runs to 1099 residues: Adenylate-forming reductase Nps11 (1099 aa).

Residues 29-360 (AEHNSNVPFF…GTECGGLNSM (332 aa)) are adenylation (A) domain. AMP contacts are provided by residues H244, 347 to 348 (NV), T352, and 432 to 435 (LVGR). Residues 578-664 (WSEESLVVWL…RLSQALARVV (87 aa)) enclose the Carrier domain. At S613 the chain carries O-(pantetheine 4'-phosphoryl)serine. The reductase (R) domain stretch occupies residues 717 to 952 (LTGSTGGLGS…VVSWLPPHAV (236 aa)). Residues 721–724 (TGGL), 809–811 (NAW), Y883, and K887 contribute to the NADP(+) site.

This sequence belongs to the adenylate-forming reductase family.

Its function is as follows. Adenylate-forming reductase, a natural product biosynthesis enzyme that resembles non-ribosomal peptide synthetases, yet serves to modify one substrate, rather than to condense two or more building blocks. The A-domain preferentially accepts benzoic acid as substrate. The natural product of the enzyme is not yet known. This chain is Adenylate-forming reductase Nps11, found in Serpula lacrymans var. lacrymans (strain S7.9) (Dry rot fungus).